A 329-amino-acid chain; its full sequence is MTDWIDGQGRQIDYLRLSVTDRCDFRCVYCMAEDMRFLPRQQVLTLEEIERVARLFVAGGVRKLRLTGGEPLVRPGIVGLCERLAALPGLRELCMTSNGSQLVRYARPLYDAGLSRLNISLDTLDPLRFRAITRNGELDKVLAGIDAAQAAGFRRIKLNAVVMKGRNADEVPALVDFAIARGLDISFIEEMPLGQVGRERGESFCSSDEVRALIAQRHALLDSAEQSGGPARYVRLVEHPQTRIGFISPHSHNFCATCNRLRLTVEGRLLLCLGHEHSLDLRALLRRHPLHDGPLLEAIGEALQRKPARHEFSAAGEVQVLRFMNMSGG.

Residues 7–230 (GQGRQIDYLR…LDSAEQSGGP (224 aa)) enclose the Radical SAM core domain. Arginine 16 is a GTP binding site. 2 residues coordinate [4Fe-4S] cluster: cysteine 23 and cysteine 27. Position 29 (tyrosine 29) interacts with S-adenosyl-L-methionine. Position 30 (cysteine 30) interacts with [4Fe-4S] cluster. GTP is bound at residue arginine 65. Glycine 69 contacts S-adenosyl-L-methionine. Threonine 96 is a GTP binding site. Serine 120 is a binding site for S-adenosyl-L-methionine. Lysine 157 contacts GTP. Methionine 191 contacts S-adenosyl-L-methionine. 2 residues coordinate [4Fe-4S] cluster: cysteine 255 and cysteine 258. 260 to 262 (RLR) serves as a coordination point for GTP. Position 272 (cysteine 272) interacts with [4Fe-4S] cluster.

This sequence belongs to the radical SAM superfamily. MoaA family. As to quaternary structure, monomer and homodimer. Requires [4Fe-4S] cluster as cofactor.

The catalysed reaction is GTP + AH2 + S-adenosyl-L-methionine = (8S)-3',8-cyclo-7,8-dihydroguanosine 5'-triphosphate + 5'-deoxyadenosine + L-methionine + A + H(+). It functions in the pathway cofactor biosynthesis; molybdopterin biosynthesis. Its function is as follows. Catalyzes the cyclization of GTP to (8S)-3',8-cyclo-7,8-dihydroguanosine 5'-triphosphate. The sequence is that of GTP 3',8-cyclase 1 (moaA1) from Pseudomonas aeruginosa (strain ATCC 15692 / DSM 22644 / CIP 104116 / JCM 14847 / LMG 12228 / 1C / PRS 101 / PAO1).